The sequence spans 188 residues: GTP-dependent dephospho-CoA kinase (188 aa).

Residues Asp43, Val44, Asp62, Glu121, and Asp144 each contribute to the GTP site.

Belongs to the GTP-dependent DPCK family.

It carries out the reaction 3'-dephospho-CoA + GTP = GDP + CoA + H(+). Its pathway is cofactor biosynthesis; coenzyme A biosynthesis. Its function is as follows. Catalyzes the GTP-dependent phosphorylation of the 3'-hydroxyl group of dephosphocoenzyme A to form coenzyme A (CoA). The chain is GTP-dependent dephospho-CoA kinase from Methanococcoides burtonii (strain DSM 6242 / NBRC 107633 / OCM 468 / ACE-M).